Consider the following 179-residue polypeptide: MYHVVAATTNPAKIKAIQLAFEDTFGQDQCRIESVDVASGVSLQPIGNHETRTGARQRVMEARQVRPEADFWVGVEAGIEENMTFAWMTVENPQTRGESRSASLMLPETILQGIRAGRELGSEMATITGNAEVKRQGGAIGIFTDGRLSRTSVYHQALLLALVPFHNPIYQNHNNAAQK.

Substrate-binding positions include 8 to 13 (TTNPAK) and 68 to 69 (EA). Position 68 (Glu-68) interacts with Mg(2+).

This sequence belongs to the YjjX NTPase family. In terms of assembly, homodimer. Mg(2+) serves as cofactor. The cofactor is Mn(2+).

The enzyme catalyses XTP + H2O = XDP + phosphate + H(+). The catalysed reaction is ITP + H2O = IDP + phosphate + H(+). Phosphatase that hydrolyzes non-canonical purine nucleotides such as XTP and ITP to their respective diphosphate derivatives. Probably excludes non-canonical purines from DNA/RNA precursor pool, thus preventing their incorporation into DNA/RNA and avoiding chromosomal lesions. This is Inosine/xanthosine triphosphatase from Serratia proteamaculans (strain 568).